The primary structure comprises 107 residues: Defensin-like protein 242 (107 aa).

The N-terminal stretch at 1–22 is a signal peptide; sequence MKVVAIFLASCVLFSLIPTHLS. 4 cysteine pairs are disulfide-bonded: cysteine 45–cysteine 100, cysteine 55–cysteine 84, cysteine 65–cysteine 94, and cysteine 82–cysteine 96.

This sequence belongs to the DEFL family.

It localises to the secreted. In Arabidopsis thaliana (Mouse-ear cress), this protein is Defensin-like protein 242 (SCRL10).